The following is an 82-amino-acid chain: Small ribosomal subunit protein uS17 (82 aa).

The protein belongs to the universal ribosomal protein uS17 family. Part of the 30S ribosomal subunit.

Its function is as follows. One of the primary rRNA binding proteins, it binds specifically to the 5'-end of 16S ribosomal RNA. The protein is Small ribosomal subunit protein uS17 of Shewanella denitrificans (strain OS217 / ATCC BAA-1090 / DSM 15013).